Reading from the N-terminus, the 70-residue chain is Small ribosomal subunit protein bS21 (70 aa).

The protein belongs to the bacterial ribosomal protein bS21 family.

The chain is Small ribosomal subunit protein bS21 from Sulfurovum sp. (strain NBC37-1).